A 126-amino-acid chain; its full sequence is Protein ApaG (126 aa).

The 125-residue stretch at 2–126 (SALDDSIRVE…FRLALPGLLH (125 aa)) folds into the ApaG domain.

In Shewanella sp. (strain MR-4), this protein is Protein ApaG.